The primary structure comprises 337 residues: tRNA N6-adenosine threonylcarbamoyltransferase (337 aa).

2 residues coordinate Fe cation: His-111 and His-115. Substrate contacts are provided by residues 134–138 (LVSGG), Asp-167, Gly-180, and Asn-272. Position 300 (Asp-300) interacts with Fe cation.

Belongs to the KAE1 / TsaD family. Requires Fe(2+) as cofactor.

The protein resides in the cytoplasm. It carries out the reaction L-threonylcarbamoyladenylate + adenosine(37) in tRNA = N(6)-L-threonylcarbamoyladenosine(37) in tRNA + AMP + H(+). Its function is as follows. Required for the formation of a threonylcarbamoyl group on adenosine at position 37 (t(6)A37) in tRNAs that read codons beginning with adenine. Is involved in the transfer of the threonylcarbamoyl moiety of threonylcarbamoyl-AMP (TC-AMP) to the N6 group of A37, together with TsaE and TsaB. TsaD likely plays a direct catalytic role in this reaction. The chain is tRNA N6-adenosine threonylcarbamoyltransferase from Salmonella arizonae (strain ATCC BAA-731 / CDC346-86 / RSK2980).